Here is a 448-residue protein sequence, read N- to C-terminus: N-succinylarginine dihydrolase (448 aa).

Residues 19 to 28, asparagine 110, and 137 to 138 each bind substrate; these read AGLSSGNIAS and HR. Residue glutamate 174 is part of the active site. A substrate-binding site is contributed by arginine 216. Residue histidine 252 is part of the active site. Positions 254 and 366 each coordinate substrate. Catalysis depends on cysteine 372, which acts as the Nucleophile.

The protein belongs to the succinylarginine dihydrolase family. Homodimer.

The enzyme catalyses N(2)-succinyl-L-arginine + 2 H2O + 2 H(+) = N(2)-succinyl-L-ornithine + 2 NH4(+) + CO2. The protein operates within amino-acid degradation; L-arginine degradation via AST pathway; L-glutamate and succinate from L-arginine: step 2/5. Functionally, catalyzes the hydrolysis of N(2)-succinylarginine into N(2)-succinylornithine, ammonia and CO(2). The protein is N-succinylarginine dihydrolase of Legionella pneumophila (strain Paris).